A 416-amino-acid polypeptide reads, in one-letter code: Homogentisate 1,2-dioxygenase (416 aa).

H275 acts as the Proton acceptor in catalysis. The Fe cation site is built by H318 and E324. Homogentisate is bound by residues Y333 and H354. H354 lines the Fe cation pocket.

It belongs to the homogentisate dioxygenase family. Hexamer; dimer of trimers. Fe cation is required as a cofactor.

It catalyses the reaction homogentisate + O2 = 4-maleylacetoacetate + H(+). It participates in amino-acid degradation; L-phenylalanine degradation; acetoacetate and fumarate from L-phenylalanine: step 4/6. Involved in the catabolism of homogentisate (2,5-dihydroxyphenylacetate or 2,5-OH-PhAc), a central intermediate in the degradation of phenylalanine and tyrosine. Catalyzes the oxidative ring cleavage of the aromatic ring of homogentisate to yield maleylacetoacetate. This chain is Homogentisate 1,2-dioxygenase, found in Legionella pneumophila (strain Corby).